The chain runs to 1182 residues: Protein patched homolog 2 (1182 aa).

Over 1-57 (MVRPLSLGELPPSYTPPARSSAPHILAGSLQAPLWLRAYFQGLLFSLGCRIQKHCGK) the chain is Cytoplasmic. Residues 58 to 78 (VLFLGLVAFGALALGLRVAVI) form a helical membrane-spanning segment. Over 79-394 (ETDLEQLWVE…DILRAFSEVS (316 aa)) the chain is Extracellular. N370 is a glycosylation site (N-linked (GlcNAc...) asparagine). The SSD domain maps to 394-552 (STTRVVGGYL…MLVFPAILSL (159 aa)). The chain crosses the membrane as a helical span at residues 395-414 (TTRVVGGYLLMLAYACVTML). The Cytoplasmic segment spans residues 415–428 (RWDCAQSQGAVGLA). Residues 429-449 (GVLLVALAVASGLGLCALLGI) form a helical membrane-spanning segment. Over 450–457 (TFNAATTQ) the chain is Extracellular. The chain crosses the membrane as a helical span at residues 458–478 (VLPFLALGIGVDDIFLLAHAF). Residues 479–501 (TKAPPDTPLPERMGECLRSTGTS) lie on the Cytoplasmic side of the membrane. A helical transmembrane segment spans residues 502–522 (VALTSVNNMVAFFMAALVPIP). Residues 523–531 (ALRAFSLQA) are Extracellular-facing. The helical transmembrane segment at 532–552 (AIVVGCNFAAVMLVFPAILSL) threads the bilayer. Over 553 to 686 (DLRRRHRQRL…APLLLQTRAK (134 aa)) the chain is Cytoplasmic. A helical transmembrane segment spans residues 687-707 (ALVLLFFGALLGLSLYGATLV). Over 708-963 (QDGLALTDVV…WEQYLGLRRC (256 aa)) the chain is Extracellular. A glycan (N-linked (GlcNAc...) asparagine) is linked at N812. The helical transmembrane segment at 964 to 984 (FLLAVCILLVCTFLVCALLLL) threads the bilayer. Over 985 to 991 (SPWTAGL) the chain is Cytoplasmic. The helical transmembrane segment at 992–1012 (IVLVLAMMTVELFGIMGFLGI) threads the bilayer. Position 1013 (K1013) is a topological domain, extracellular. Residues 1014-1034 (LSAIPVVILVASIGIGVEFTV) form a helical membrane-spanning segment. At 1035–1064 (HVALGFLTSHGSRNLRAASALEQTFAPVTD) the chain is on the cytoplasmic side. Residues 1065–1085 (GAVSTLLGLLMLAGSNFDFII) form a helical membrane-spanning segment. Residue R1086 is a topological domain, extracellular. Residues 1087–1107 (YFFVVLTVLTLLGLLHGLLLL) form a helical membrane-spanning segment. At 1108–1182 (PVLLSILGPP…YVHPASEEPT (75 aa)) the chain is on the cytoplasmic side.

The protein belongs to the patched family. As to expression, expressed in epithelial cells of the developing hair, tooth and whisker.

Its subcellular location is the membrane. Its function is as follows. Plays a role in the control of cellular growth. May have a role in epidermal development. May act as a receptor for Sonic hedgehog (SHH). The polypeptide is Protein patched homolog 2 (Ptch2) (Mus musculus (Mouse)).